A 336-amino-acid polypeptide reads, in one-letter code: MLQSLAGSSCVRLVERHRSAWCFGFLVLGYLLYLVFGAVVFSSVELPYEDLLRQELRKLKRRFVEEHECLSEQQLEQFLGRVLEANNYGVSVRSNASGNWNWDFASALFFASTVLSTTGYGHTVPLSDGGKAFCIIYSVIGIPFTLLFLTAVVQRVTVHVTRRPVLYFHVRWGFSKQVVAIVHAVLLGLITVSCFFFIPAAVFSVLEDDWNFLESFYFCFISLSTIGLGDYVPGEGYNQKFRELYKIGITCYLLLGLIAMLVVLETFCELHELKKFRKMFYVKKDKDEDQVHIIEHDQLSFSSITEQAAGMKEDQKQNEPFVATPSSACADGPANH.

At 1-20 the chain is on the cytoplasmic side; the sequence is MLQSLAGSSCVRLVERHRSA. Residues 21–41 traverse the membrane as a helical segment; sequence WCFGFLVLGYLLYLVFGAVVF. The Extracellular portion of the chain corresponds to 42–103; the sequence is SSVELPYEDL…SNASGNWNWD (62 aa). Residue Asn95 is glycosylated (N-linked (GlcNAc...) asparagine). An intramembrane region (helical) is located at residues 104 to 116; sequence FASALFFASTVLS. The stretch at 117-122 is an intramembrane region; that stretch reads TTGYGH. The tract at residues 117–122 is selectivity filter 1; it reads TTGYGH. The Extracellular portion of the chain corresponds to 123–132; the sequence is TVPLSDGGKA. Residues 133 to 156 form a helical membrane-spanning segment; the sequence is FCIIYSVIGIPFTLLFLTAVVQRV. The Cytoplasmic segment spans residues 157–181; sequence TVHVTRRPVLYFHVRWGFSKQVVAI. A helical membrane pass occupies residues 182 to 202; the sequence is VHAVLLGLITVSCFFFIPAAV. Residues 203 to 211 lie on the Extracellular side of the membrane; that stretch reads FSVLEDDWN. An intramembrane region (helical) is located at residues 212–224; the sequence is FLESFYFCFISLS. The tract at residues 225 to 230 is selectivity filter 2; it reads TIGLGD. Residues 225–231 lie within the membrane without spanning it; the sequence is TIGLGDY. The Extracellular portion of the chain corresponds to 232–243; sequence VPGEGYNQKFRE. A helical membrane pass occupies residues 244-267; sequence LYKIGITCYLLLGLIAMLVVLETF. Residues 268 to 336 are Cytoplasmic-facing; the sequence is CELHELKKFR…SACADGPANH (69 aa). Lys274 is covalently cross-linked (Glycyl lysine isopeptide (Lys-Gly) (interchain with G-Cter in SUMO)). The important for intracellular retention in recycling endosomes stretch occupies residues 293–299; that stretch reads IIEHDQL. The segment at 315–336 is disordered; it reads QKQNEPFVATPSSACADGPANH. At Ser326 the chain carries Phosphoserine.

This sequence belongs to the two pore domain potassium channel (TC 1.A.1.8) family. As to quaternary structure, homodimer; disulfide-linked. Heterodimer with KCNK2; disulfide-linked. In astrocytes, forms mostly heterodimeric potassium channels with KCNK2, with only a minor proportion of functional channels containing homodimeric KCNK1. Interacts with KCNK3 and KCNK9, forming functional heterodimeric channels. Interacts with GNG4. Identified in a complex with PSD and ARF6; interacts only with PSD that is bound to ARF6. Interacts with UBE2I. Post-translationally, sumoylation is controversial. Sumoylated by UBE2I. Not sumoylated when expressed in xenopus oocytes or mammalian cells. Sumoylation inactivates the channel, but does not interfere with expression at the cell membrane. Sumoylation of a single subunit is sufficient to silence the dimeric channel. Sumoylation of KCNK1 is sufficient to silence heterodimeric channels formed by KCNK1 and KCNK3 or KCNK9. Desumoylated by SENP1; this activates the channel. Desumoylated by SENP1; this strongly increases halothane-mediated activation of heterodimeric channels formed with KCNK9. SENP1 treatment has no effect. Expressed in renal distal tubules, especially in cortical collecting duct and cortical thick ascending limb, with lower levels in the connecting tubule.

It is found in the cell membrane. The protein localises to the recycling endosome. Its subcellular location is the synaptic cell membrane. It localises to the cytoplasmic vesicle. The protein resides in the perikaryon. It is found in the cell projection. The protein localises to the dendrite. Its subcellular location is the apical cell membrane. The catalysed reaction is K(+)(in) = K(+)(out). It carries out the reaction NH4(+)(in) = NH4(+)(out). The enzyme catalyses Na(+)(in) = Na(+)(out). It catalyses the reaction Rb(+)(in) = Rb(+)(out). The catalysed reaction is Cs(+)(in) = Cs(+)(out). It carries out the reaction Li(+)(in) = Li(+)(out). The enzyme catalyses L-glutamate(out) = L-glutamate(in). It catalyses the reaction chloride(in) = chloride(out). Its function is as follows. Ion channel that contributes to passive transmembrane potassium transport and to the regulation of the resting membrane potential in brain astrocytes, but also in kidney and in other tissues. Forms dimeric channels through which potassium ions pass in accordance with their electrochemical gradient. The channel is selective for K(+) ions at physiological potassium concentrations and at neutral pH, but becomes permeable to Na(+) at subphysiological K(+) levels and upon acidification of the extracellular medium. The homodimer has very low potassium channel activity, when expressed in heterologous systems, and can function as weakly inward rectifying potassium channel. Channel activity is modulated by activation of serotonin receptors. Heterodimeric channels containing KCNK1 and KCNK2 have much higher activity, and may represent the predominant form in astrocytes. Heterodimeric channels containing KCNK1 and KCNK3 or KCNK9 have much higher activity. Heterodimeric channels formed by KCNK1 and KCNK9 may contribute to halothane-sensitive currents. Mediates outward rectifying potassium currents in dentate gyrus granule cells and contributes to the regulation of their resting membrane potential. Contributes to the regulation of action potential firing in dentate gyrus granule cells and down-regulates their intrinsic excitability. In astrocytes, the heterodimer formed by KCNK1 and KCNK2 is required for rapid glutamate release in response to activation of G-protein coupled receptors, such as F2R and CNR1. Required for normal ion and water transport in the kidney. Contributes to the regulation of the resting membrane potential of pancreatic beta cells. The low channel activity of homodimeric KCNK1 may be due to sumoylation. The low channel activity may be due to rapid internalization from the cell membrane and retention in recycling endosomes. Permeable to monovalent cations with ion selectivity for K(+) &gt; Rb(+) &gt;&gt; NH4(+) &gt;&gt; Cs(+) = Na(+) = Li(+). This chain is Potassium channel subfamily K member 1, found in Oryctolagus cuniculus (Rabbit).